Consider the following 339-residue polypeptide: Transaldolase (339 aa).

Lysine 135 (schiff-base intermediate with substrate) is an active-site residue.

It belongs to the transaldolase family. Type 1 subfamily. In terms of assembly, homodimer.

Its subcellular location is the cytoplasm. It catalyses the reaction D-sedoheptulose 7-phosphate + D-glyceraldehyde 3-phosphate = D-erythrose 4-phosphate + beta-D-fructose 6-phosphate. Its pathway is carbohydrate degradation; pentose phosphate pathway; D-glyceraldehyde 3-phosphate and beta-D-fructose 6-phosphate from D-ribose 5-phosphate and D-xylulose 5-phosphate (non-oxidative stage): step 2/3. Its function is as follows. Transaldolase is important for the balance of metabolites in the pentose-phosphate pathway. In Prochlorococcus marinus (strain MIT 9211), this protein is Transaldolase.